Reading from the N-terminus, the 534-residue chain is CTP synthase (534 aa).

The amidoligase domain stretch occupies residues 1–267 (MTKYIFVTGG…DQIVCDHLKL (267 aa)). A CTP-binding site is contributed by Ser13. A UTP-binding site is contributed by Ser13. Position 14–19 (14–19 (SIGKGI)) interacts with ATP. Residue Tyr54 coordinates L-glutamine. Asp71 contacts ATP. Residues Asp71 and Glu141 each coordinate Mg(2+). CTP is bound by residues 148 to 150 (DIE), 188 to 193 (KTKPTQ), and Lys224. UTP contacts are provided by residues 188–193 (KTKPTQ) and Lys224. Position 240 to 242 (240 to 242 (RDV)) interacts with ATP. Residues 292–534 (KIALVGKYVE…FVTAAIKNSN (243 aa)) form the Glutamine amidotransferase type-1 domain. Gly354 contacts L-glutamine. The active-site Nucleophile; for glutamine hydrolysis is the Cys381. L-glutamine-binding positions include 382-385 (LGMQ), Glu405, and Arg463. Active-site residues include His508 and Glu510.

This sequence belongs to the CTP synthase family. In terms of assembly, homotetramer.

It carries out the reaction UTP + L-glutamine + ATP + H2O = CTP + L-glutamate + ADP + phosphate + 2 H(+). It catalyses the reaction L-glutamine + H2O = L-glutamate + NH4(+). The catalysed reaction is UTP + NH4(+) + ATP = CTP + ADP + phosphate + 2 H(+). It participates in pyrimidine metabolism; CTP biosynthesis via de novo pathway; CTP from UDP: step 2/2. With respect to regulation, allosterically activated by GTP, when glutamine is the substrate; GTP has no effect on the reaction when ammonia is the substrate. The allosteric effector GTP functions by stabilizing the protein conformation that binds the tetrahedral intermediate(s) formed during glutamine hydrolysis. Inhibited by the product CTP, via allosteric rather than competitive inhibition. Catalyzes the ATP-dependent amination of UTP to CTP with either L-glutamine or ammonia as the source of nitrogen. Regulates intracellular CTP levels through interactions with the four ribonucleotide triphosphates. This Streptococcus pyogenes serotype M2 (strain MGAS10270) protein is CTP synthase.